The primary structure comprises 1702 residues: Immunoglobulin A1 protease autotransporter (1702 aa).

A signal peptide spans Met1–Ala25. In terms of domain architecture, Peptidase S6 spans Ala26–Thr332. Ser288 is a catalytic residue. Positions Val991–Arg1411 are disordered. A compositionally biased stretch (polar residues) spans Thr997–Glu1021. A compositionally biased stretch (low complexity) spans Thr1037 to Glu1047. Positions Ser1049 to Gln1061 are enriched in basic and acidic residues. A compositionally biased stretch (polar residues) spans Lys1082–Ser1095. Composition is skewed to basic and acidic residues over residues Glu1104–Ile1132 and Ala1150–Glu1162. Repeat copies occupy residues Ala1109–Lys1116 and Ala1117–Lys1124. Residues Ala1109 to Lys1124 are 2 X 8 AA tandem repeats of A-K-V-E-K-E-E-K. Polar residues-rich tracts occupy residues Thr1163 to Ser1186 and Val1207 to Gln1218. Over residues Pro1219 to Gln1234 the composition is skewed to basic and acidic residues. Composition is skewed to polar residues over residues Glu1235–Pro1255, Asn1263–Thr1305, and Thr1316–Asn1341. A compositionally biased stretch (low complexity) spans Glu1360–Asp1378. Basic residues predominate over residues Arg1382 to Ser1392. Residues Asn1450 to Phe1702 enclose the Autotransporter domain.

The protein resides in the periplasm. The protein localises to the secreted. Its subcellular location is the cell surface. It is found in the cell outer membrane. It carries out the reaction Cleavage of immunoglobulin A molecules at certain Pro-|-Xaa bonds in the hinge region. No small molecule substrates are known.. Functionally, virulence factor; cleaves host immunoglobulin A producing intact Fc and Fab fragments. The sequence is that of Immunoglobulin A1 protease autotransporter (iga) from Haemophilus influenzae.